Here is a 303-residue protein sequence, read N- to C-terminus: Probable 5-dehydro-4-deoxyglucarate dehydratase (303 aa).

The protein belongs to the DapA family.

The enzyme catalyses 5-dehydro-4-deoxy-D-glucarate + H(+) = 2,5-dioxopentanoate + CO2 + H2O. It participates in carbohydrate acid metabolism; D-glucarate degradation; 2,5-dioxopentanoate from D-glucarate: step 2/2. The polypeptide is Probable 5-dehydro-4-deoxyglucarate dehydratase (Variovorax paradoxus (strain S110)).